The chain runs to 105 residues: Insulin (105 aa).

The N-terminal stretch at 1-24 (MALWTRLVPLLALLALWAPAPAHA) is a signal peptide. 3 disulfide bridges follow: Cys-31/Cys-91, Cys-43/Cys-104, and Cys-90/Cys-95. Residues 57 to 82 (EVEGPQVGALELAGGPGAGGLEGPPQ) constitute a propeptide, c peptide.

The protein belongs to the insulin family. Heterodimer of a B chain and an A chain linked by two disulfide bonds.

The protein localises to the secreted. Insulin decreases blood glucose concentration. It increases cell permeability to monosaccharides, amino acids and fatty acids. It accelerates glycolysis, the pentose phosphate cycle, and glycogen synthesis in liver. The chain is Insulin (INS) from Ovis aries (Sheep).